Consider the following 239-residue polypeptide: Sugar fermentation stimulation protein homolog (239 aa).

It belongs to the SfsA family.

The polypeptide is Sugar fermentation stimulation protein homolog (Sinorhizobium medicae (strain WSM419) (Ensifer medicae)).